The sequence spans 507 residues: TOM1-like protein 2 (507 aa).

The VHS domain occupies 20–152 (ATDGSLQSED…ELKRKGVEFP (133 aa)). Position 160 is a phosphoserine (Ser160). The disordered stretch occupies residues 162-210 (IHTPQRSVPEVDPAATMPRSQSQQRTSAGSYSSPPPAPYSAPQAPALSV). At Thr164 the chain carries Phosphothreonine. The 89-residue stretch at 219–307 (EQIARLRSEL…VFLRYERFER (89 aa)) folds into the GAT domain. The Clathrin-binding motif lies at 329–334 (NLIDLG). The tract at residues 467 to 507 (RAKAAEMVPDLPSPPMEAPAPASNPSGRKKPERSEDALFAL) is disordered. Residues 498 to 507 (ERSEDALFAL) show a composition bias toward basic and acidic residues.

It belongs to the TOM1 family. As to quaternary structure, interacts with clathrin, SRC and TOLLIP. Interacts with MYO6. In terms of tissue distribution, ubiquitously expressed with higher expression in heart and skeletal muscle.

In terms of biological role, acts as a MYO6/Myosin VI adapter protein that targets myosin VI to endocytic structures. May also play a role in recruiting clathrin to endosomes. May regulate growth factor-induced mitogenic signaling. The protein is TOM1-like protein 2 (TOM1L2) of Homo sapiens (Human).